An 868-amino-acid polypeptide reads, in one-letter code: DNA mismatch repair protein MutS (868 aa).

Residue 620–627 participates in ATP binding; that stretch reads GPNMGGKS.

Belongs to the DNA mismatch repair MutS family.

This protein is involved in the repair of mismatches in DNA. It is possible that it carries out the mismatch recognition step. This protein has a weak ATPase activity. This Xylella fastidiosa (strain 9a5c) protein is DNA mismatch repair protein MutS.